The following is a 257-amino-acid chain: NAD-capped RNA hydrolase NudC (257 aa).

Residue arginine 69 coordinates substrate. Residues cysteine 98 and cysteine 101 each contribute to the Zn(2+) site. A substrate-binding site is contributed by glutamate 111. Zn(2+) contacts are provided by cysteine 116 and cysteine 119. Substrate is bound at residue tyrosine 124. Residues 125 to 248 enclose the Nudix hydrolase domain; it reads PQIAPCIIVA…TVARRLIEDT (124 aa). 3 residues coordinate a divalent metal cation: alanine 158, glutamate 174, and glutamate 178. The short motif at 159-180 is the Nudix box element; it reads GFVEVGETLEQAVAREVMEESG. Residue 192 to 199 participates in substrate binding; it reads QPWPFPQS. Glutamate 219 is an a divalent metal cation binding site. Substrate is bound at residue alanine 241.

Belongs to the Nudix hydrolase family. NudC subfamily. Homodimer. Mg(2+) serves as cofactor. Mn(2+) is required as a cofactor. The cofactor is Zn(2+).

It carries out the reaction a 5'-end NAD(+)-phospho-ribonucleoside in mRNA + H2O = a 5'-end phospho-adenosine-phospho-ribonucleoside in mRNA + beta-nicotinamide D-ribonucleotide + 2 H(+). The catalysed reaction is NAD(+) + H2O = beta-nicotinamide D-ribonucleotide + AMP + 2 H(+). It catalyses the reaction NADH + H2O = reduced beta-nicotinamide D-ribonucleotide + AMP + 2 H(+). In terms of biological role, mRNA decapping enzyme that specifically removes the nicotinamide adenine dinucleotide (NAD) cap from a subset of mRNAs by hydrolyzing the diphosphate linkage to produce nicotinamide mononucleotide (NMN) and 5' monophosphate mRNA. The NAD-cap is present at the 5'-end of some mRNAs and stabilizes RNA against 5'-processing. Has preference for mRNAs with a 5'-end purine. Catalyzes the hydrolysis of a broad range of dinucleotide pyrophosphates. The sequence is that of NAD-capped RNA hydrolase NudC from Salmonella dublin (strain CT_02021853).